The primary structure comprises 332 residues: Biotin synthase (332 aa).

The Radical SAM core domain maps to 53-282; that stretch reads YFGKKVKLNM…TKEIRISGGR (230 aa). Residues Cys-71, Cys-75, and Cys-78 each coordinate [4Fe-4S] cluster. Residues Cys-115, Cys-147, Cys-207, and Arg-277 each contribute to the [2Fe-2S] cluster site.

This sequence belongs to the radical SAM superfamily. Biotin synthase family. In terms of assembly, homodimer. The cofactor is [4Fe-4S] cluster. [2Fe-2S] cluster is required as a cofactor.

The catalysed reaction is (4R,5S)-dethiobiotin + (sulfur carrier)-SH + 2 reduced [2Fe-2S]-[ferredoxin] + 2 S-adenosyl-L-methionine = (sulfur carrier)-H + biotin + 2 5'-deoxyadenosine + 2 L-methionine + 2 oxidized [2Fe-2S]-[ferredoxin]. It participates in cofactor biosynthesis; biotin biosynthesis; biotin from 7,8-diaminononanoate: step 2/2. Catalyzes the conversion of dethiobiotin (DTB) to biotin by the insertion of a sulfur atom into dethiobiotin via a radical-based mechanism. This chain is Biotin synthase, found in Bacillus anthracis.